We begin with the raw amino-acid sequence, 1891 residues long: Protein TIC 214 (1891 aa).

6 consecutive transmembrane segments (helical) span residues 18-38, 64-84, 87-107, 124-144, 172-192, and 221-241; these read IINSVVVVGLYYGFLTTFSIG, FITGQLMMFISIYYAPLHLAL, PHTITVLALPYLLFHFFWNNH, LSIQCVFLNNLIFQLFNHFIL, VGWLIGHILFMKWLGLVLVWI, and IFSILLFITCVYYLGRIPSPI. 3 disordered regions span residues 248–300, 788–807, and 1580–1607; these read EASK…EGWD, EEQTKREEKKEKDKKEDNKR, and KNRSQEAKEPPSQRERGSDIENKGNLSP. Residues 256 to 268 show a composition bias toward acidic residues; the sequence is VESEEERDVEIET. Over residues 1582-1601 the composition is skewed to basic and acidic residues; it reads RSQEAKEPPSQRERGSDIEN.

The protein belongs to the TIC214 family. Part of the Tic complex.

It localises to the plastid. It is found in the chloroplast inner membrane. Functionally, involved in protein precursor import into chloroplasts. May be part of an intermediate translocation complex acting as a protein-conducting channel at the inner envelope. This is Protein TIC 214 from Solanum lycopersicum (Tomato).